Here is a 112-residue protein sequence, read N- to C-terminus: Integration host factor subunit alpha (112 aa).

It belongs to the bacterial histone-like protein family. In terms of assembly, heterodimer of an alpha and a beta chain.

Its function is as follows. This protein is one of the two subunits of integration host factor, a specific DNA-binding protein that functions in genetic recombination as well as in transcriptional and translational control. This Sinorhizobium medicae (strain WSM419) (Ensifer medicae) protein is Integration host factor subunit alpha.